Consider the following 97-residue polypeptide: MIHVEVVYALPTEQVVFKLAVKADQTVQEIIEQSGVLERYPDIDLVVNKVGVFSRNVKLDATIRDKDRIEIYRPLLADPKEIRRKRAAQAKKEAAKK.

The protein belongs to the UPF0125 (RnfH) family.

This is Protein RnfH from Aliivibrio salmonicida (strain LFI1238) (Vibrio salmonicida (strain LFI1238)).